Here is a 315-residue protein sequence, read N- to C-terminus: Beta-carotene hydroxylase 1, chloroplastic (315 aa).

A chloroplast-targeting transit peptide spans 1 to 58 (MAAEISISASSRAICLQRNPFPAPKYFATAPPLLFFSPLTCNLDAILRSRRKPRLAAC). Helical transmembrane passes span 112–132 (YLVA…ISVY) and 146–166 (FSEM…MEYW). Positions 159-286 (AAIGMEYWAR…KFDGVPYGLF (128 aa)) constitute a Fatty acid hydroxylase domain. The short motif at 171–176 (HRALWH) is the Histidine box-1 element. A Histidine box-2 motif is present at residues 183–187 (HESHH). The next 2 membrane-spanning stretches (helical) occupy residues 196–216 (LNDI…SFGF) and 222–242 (IPGL…AYMF). Positions 244–249 (HDGLVH) match the Histidine box-3 motif. A Histidine box-4 motif is present at residues 270–274 (HQLHH).

This sequence belongs to the sterol desaturase family.

The protein resides in the plastid. It localises to the chloroplast membrane. It carries out the reaction all-trans-beta-carotene + 4 reduced [2Fe-2S]-[ferredoxin] + 2 O2 + 4 H(+) = all-trans-zeaxanthin + 4 oxidized [2Fe-2S]-[ferredoxin] + 2 H2O. The catalysed reaction is all-trans-beta-carotene + 2 reduced [2Fe-2S]-[ferredoxin] + O2 + 2 H(+) = beta-cryptoxanthin + 2 oxidized [2Fe-2S]-[ferredoxin] + H2O. It catalyses the reaction beta-cryptoxanthin + 2 reduced [2Fe-2S]-[ferredoxin] + O2 + 2 H(+) = all-trans-zeaxanthin + 2 oxidized [2Fe-2S]-[ferredoxin] + H2O. Its activity is regulated as follows. Inhibited by o-phenanthroline and 8-hydroxyquinoline. Functionally, nonheme diiron monooxygenase involved in the biosynthesis of xanthophylls. Specific for beta-ring hydroxylations of beta-carotene. Produces beta-cryptoxanthin and zeaxanthin. Uses ferredoxin as an electron donor. The polypeptide is Beta-carotene hydroxylase 1, chloroplastic (Capsicum annuum (Capsicum pepper)).